We begin with the raw amino-acid sequence, 502 residues long: UDP-N-acetylmuramoylalanine--D-glutamate ligase (502 aa).

136-142 contributes to the ATP binding site; the sequence is GTNGKTT.

It belongs to the MurCDEF family.

It is found in the cytoplasm. It catalyses the reaction UDP-N-acetyl-alpha-D-muramoyl-L-alanine + D-glutamate + ATP = UDP-N-acetyl-alpha-D-muramoyl-L-alanyl-D-glutamate + ADP + phosphate + H(+). It functions in the pathway cell wall biogenesis; peptidoglycan biosynthesis. Functionally, cell wall formation. Catalyzes the addition of glutamate to the nucleotide precursor UDP-N-acetylmuramoyl-L-alanine (UMA). The chain is UDP-N-acetylmuramoylalanine--D-glutamate ligase from Corynebacterium jeikeium (strain K411).